Here is a 227-residue protein sequence, read N- to C-terminus: DNA packaging ATPase P9 (227 aa).

Gly16–Thr23 is an ATP binding site.

Heterodimer of P6 and P9; further multimerizes as hexamers of heterodimers. Part of the dodecameric portal complex that is composed of the packaging efficiency factor P6, the DNA packaging ATPase P9, and the internal heterododecamer P20/P22 which spans the virion inner membrane.

Its subcellular location is the virion. In terms of biological role, together with the packaging efficiency factor P6, forms the external part of the portal vertex that is embeded in the capsid and which plays critical roles in genome packaging and genome ejection. Both proteins multimerize as a single ring-shaped heterdodecamer arranged around a central channel. The chain is DNA packaging ATPase P9 (IX) from Enterobacteria phage PRD1 (Bacteriophage PRD1).